The primary structure comprises 242 residues: TGACG-sequence-specific DNA-binding protein TGA-1B (242 aa).

The tract at residues 1 to 125 (EFCDFSGNQA…HSSPNFENNS (125 aa)) is disordered. Positions 18–45 (DTSSPELRQSSSGSDVLNATSSTSSHQV) are enriched in polar residues. Residues 66 to 79 (EGSRESANDNKGLG) are compositionally biased toward basic and acidic residues. Polar residues predominate over residues 88–125 (SPESQGSGNYGSNVSEGLNYPSDSNKSVHSSPNFENNS). The bZIP domain occupies 183–242 (DEKKRARLVRNRESAQLSRQRKKHYVEELEDKVRIMHSTIQDLNAKVAYIIAENATLKTQ). The segment at 185–216 (KKRARLVRNRESAQLSRQRKKHYVEELEDKVR) is basic motif. A leucine-zipper region spans residues 225 to 239 (LNAKVAYIIAENATL).

Belongs to the bZIP family.

It localises to the nucleus. Functionally, binds specifically to the DNA sequence 5'-TGACG-3'. The protein is TGACG-sequence-specific DNA-binding protein TGA-1B (TGA1B) of Nicotiana tabacum (Common tobacco).